Reading from the N-terminus, the 265-residue chain is Mlc titration factor A (265 aa).

Zn(2+) is bound by residues His-111, His-148, His-152, and Glu-211.

This sequence belongs to the MtfA family. Monomer in solution. Interacts with Mlc. It depends on Zn(2+) as a cofactor.

The protein localises to the cytoplasm. Association between Mlc and MtfA may induce structural changes that activate the peptidase activity of MtfA while inactivating the DNA-binding ability of Mlc. The aminopeptidase activity is partially inhibited by metal chelators such as EDTA and phenantroline, but not by inhibitors for serine-, aspartyl-, or cysteine-proteases. In terms of biological role, involved in the modulation of the activity of the glucose-phosphotransferase system (glucose-PTS). Interacts with the transcriptional repressor Mlc, preventing its interaction with DNA and leading to the modulation of expression of genes regulated by Mlc, including ptsG, which encodes the PTS system glucose-specific EIICB component. Shows zinc-dependent metallopeptidase activity. In vitro, can cleave several artificial substrates. The highest activity is observed for L-alanine fused to 4-nitroanilide (L-alanine-pNA). Shows lower activity towards proline-pNA and valine-pNA. This chain is Mlc titration factor A, found in Klebsiella pneumoniae subsp. pneumoniae (strain ATCC 700721 / MGH 78578).